The following is a 500-amino-acid chain: Probable cytosol aminopeptidase (500 aa).

Mn(2+)-binding residues include K264 and D269. The active site involves K276. D287, D346, and E348 together coordinate Mn(2+). R350 is a catalytic residue.

The protein belongs to the peptidase M17 family. Mn(2+) is required as a cofactor.

The protein resides in the cytoplasm. The catalysed reaction is Release of an N-terminal amino acid, Xaa-|-Yaa-, in which Xaa is preferably Leu, but may be other amino acids including Pro although not Arg or Lys, and Yaa may be Pro. Amino acid amides and methyl esters are also readily hydrolyzed, but rates on arylamides are exceedingly low.. It catalyses the reaction Release of an N-terminal amino acid, preferentially leucine, but not glutamic or aspartic acids.. In terms of biological role, presumably involved in the processing and regular turnover of intracellular proteins. Catalyzes the removal of unsubstituted N-terminal amino acids from various peptides. This chain is Probable cytosol aminopeptidase, found in Chlamydia abortus (strain DSM 27085 / S26/3) (Chlamydophila abortus).